A 773-amino-acid chain; its full sequence is Probable dipeptidyl peptidase 4 (773 aa).

The N-terminal stretch at 1-18 (MKLSVLSVLLVSVAQAAA) is a signal peptide. N37, N80, N112, N220, N471, and N496 each carry an N-linked (GlcNAc...) asparagine glycan. S619 (charge relay system) is an active-site residue. The N-linked (GlcNAc...) asparagine glycan is linked to N671. Catalysis depends on charge relay system residues D696 and H731.

The protein belongs to the peptidase S9B family.

The protein resides in the secreted. The enzyme catalyses Release of an N-terminal dipeptide, Xaa-Yaa-|-Zaa-, from a polypeptide, preferentially when Yaa is Pro, provided Zaa is neither Pro nor hydroxyproline.. Its function is as follows. Extracellular dipeptidyl-peptidase which removes N-terminal dipeptides sequentially from polypeptides having unsubstituted N-termini provided that the penultimate residue is proline. The protein is Probable dipeptidyl peptidase 4 (dpp4) of Emericella nidulans (strain FGSC A4 / ATCC 38163 / CBS 112.46 / NRRL 194 / M139) (Aspergillus nidulans).